We begin with the raw amino-acid sequence, 114 residues long: MMTEISVPLIFTDAAANKVKALISEEENPNLKLRVYITGGGCSGFQYGFTFDEKVNDGDLTIEKSGVHLVIDPMSLQYLIGGTVDYTEGLEGSRFVVNNPNASTTCGCGSSFSI.

C42, C106, and C108 together coordinate iron-sulfur cluster.

It belongs to the HesB/IscA family. In terms of assembly, homodimer. Requires iron-sulfur cluster as cofactor.

Its function is as follows. Required for insertion of 4Fe-4S clusters for at least IspG. This chain is Iron-sulfur cluster insertion protein ErpA, found in Pasteurella multocida (strain Pm70).